A 249-amino-acid chain; its full sequence is MIALKAPRVHVFLAEKGVGSRRFCEELIRKKLVRVNNTIAKLGDKVTLGDRIIYKKQIFVFKDFQINNRIYLALNKPRNYLCSNFDVDGRKLAISLVQPLFKERVFSIGRLDFKSSGLLLFTNDGKFANDIIHPRQKVEREYIIESKKDIDENLLISFKSGIKVKKEFFKLKSYEILNKNSARLILDEGKNREIRKVFLSKNIFLKKIHRIRIGNINLDSLKEGQVKIVPLSKINSLKSRLEKLNDNSN.

One can recognise an S4 RNA-binding domain in the interval 7–64; the sequence is PRVHVFLAEKGVGSRRFCEELIRKKLVRVNNTIAKLGDKVTLGDRIIYKKQIFVFKDF. Residue Asp-112 is the Nucleophile of the active site.

This sequence belongs to the pseudouridine synthase RsuA family.

It catalyses the reaction a uridine in RNA = a pseudouridine in RNA. This is an uncharacterized protein from Borreliella burgdorferi (strain ATCC 35210 / DSM 4680 / CIP 102532 / B31) (Borrelia burgdorferi).